Reading from the N-terminus, the 207-residue chain is uncharacterized protein (207 aa).

This is an uncharacterized protein from Haemophilus influenzae (strain ATCC 51907 / DSM 11121 / KW20 / Rd).